Reading from the N-terminus, the 876-residue chain is Valine--tRNA ligase (876 aa).

The 'HIGH' region signature appears at 44–54 (PNVTGKLHLGH). The 'KMSKS' region motif lies at 520–524 (KMSKS). Lysine 523 contributes to the ATP binding site. The stretch at 805–876 (LEGLIDMDKE…VKARIEQLKA (72 aa)) forms a coiled coil.

The protein belongs to the class-I aminoacyl-tRNA synthetase family. ValS type 1 subfamily. In terms of assembly, monomer.

It localises to the cytoplasm. It carries out the reaction tRNA(Val) + L-valine + ATP = L-valyl-tRNA(Val) + AMP + diphosphate. Its function is as follows. Catalyzes the attachment of valine to tRNA(Val). As ValRS can inadvertently accommodate and process structurally similar amino acids such as threonine, to avoid such errors, it has a 'posttransfer' editing activity that hydrolyzes mischarged Thr-tRNA(Val) in a tRNA-dependent manner. The sequence is that of Valine--tRNA ligase from Staphylococcus carnosus (strain TM300).